The chain runs to 600 residues: UvrABC system protein C (600 aa).

The GIY-YIG domain occupies 15-100 (NSAGVYQYFN…IKQLHPKYNI (86 aa)). Residues 203–238 (SILIKNLEKQMLVLAQNENYEEAAKVRDQIVTIKDL) enclose the UVR domain.

The protein belongs to the UvrC family. As to quaternary structure, interacts with UvrB in an incision complex.

It is found in the cytoplasm. The UvrABC repair system catalyzes the recognition and processing of DNA lesions. UvrC both incises the 5' and 3' sides of the lesion. The N-terminal half is responsible for the 3' incision and the C-terminal half is responsible for the 5' incision. This is UvrABC system protein C from Campylobacter jejuni subsp. jejuni serotype O:6 (strain 81116 / NCTC 11828).